Here is a 1374-residue protein sequence, read N- to C-terminus: DNA-directed RNA polymerase subunit beta (1374 aa).

Belongs to the RNA polymerase beta chain family. In terms of assembly, the RNAP catalytic core consists of 2 alpha, 1 beta, 1 beta' and 1 omega subunit. When a sigma factor is associated with the core the holoenzyme is formed, which can initiate transcription.

It carries out the reaction RNA(n) + a ribonucleoside 5'-triphosphate = RNA(n+1) + diphosphate. Its function is as follows. DNA-dependent RNA polymerase catalyzes the transcription of DNA into RNA using the four ribonucleoside triphosphates as substrates. The sequence is that of DNA-directed RNA polymerase subunit beta from Rhodopseudomonas palustris (strain TIE-1).